The sequence spans 860 residues: Ribosome-releasing factor 2, mitochondrial (860 aa).

Residues 45–337 form the tr-type G domain; that stretch reads DRTRNIGIIA…AVVNFLPSPL (293 aa). Residues 54–61, 118–122, and 172–175 contribute to the GTP site; these read AHIDAGKT, DTPGH, and NKMD.

It belongs to the TRAFAC class translation factor GTPase superfamily. Classic translation factor GTPase family. EF-G/EF-2 subfamily.

It is found in the mitochondrion. Functionally, mitochondrial GTPase that mediates the disassembly of ribosomes from messenger RNA at the termination of mitochondrial protein biosynthesis. Not involved in the GTP-dependent ribosomal translocation step during translation elongation. In Debaryomyces hansenii (strain ATCC 36239 / CBS 767 / BCRC 21394 / JCM 1990 / NBRC 0083 / IGC 2968) (Yeast), this protein is Ribosome-releasing factor 2, mitochondrial.